The primary structure comprises 85 residues: Large ribosomal subunit protein bL27 (85 aa).

The segment at 1–21 (MAHKKGGGSTHNGRDSKPKML) is disordered.

This sequence belongs to the bacterial ribosomal protein bL27 family.

The sequence is that of Large ribosomal subunit protein bL27 from Albidiferax ferrireducens (strain ATCC BAA-621 / DSM 15236 / T118) (Rhodoferax ferrireducens).